A 199-amino-acid polypeptide reads, in one-letter code: MHKKSFVTTLSVCVMILGLAALGFAQEAAEGGAHHANSGAQMKDFMWRTIDFALLVAIAVWALKKADVKGSLAARRSGIEKTLQEAVAAKEAAEKKFAEYSQRLDQANKEIEVISANMKREGELEKERIIAEANDAAARIKAQAEASAAQEVLKAKAELRAEAAKLAVELAEQKIVKNIAKGDQDKLVGEYISKVVTLH.

The chain crosses the membrane as a helical span at residues 5–25 (SFVTTLSVCVMILGLAALGFA).

This sequence belongs to the ATPase B chain family. In terms of assembly, F-type ATPases have 2 components, F(1) - the catalytic core - and F(0) - the membrane proton channel. F(1) has five subunits: alpha(3), beta(3), gamma(1), delta(1), epsilon(1). F(0) has three main subunits: a(1), b(2) and c(10-14). The alpha and beta chains form an alternating ring which encloses part of the gamma chain. F(1) is attached to F(0) by a central stalk formed by the gamma and epsilon chains, while a peripheral stalk is formed by the delta and b chains.

It localises to the cell inner membrane. Functionally, f(1)F(0) ATP synthase produces ATP from ADP in the presence of a proton or sodium gradient. F-type ATPases consist of two structural domains, F(1) containing the extramembraneous catalytic core and F(0) containing the membrane proton channel, linked together by a central stalk and a peripheral stalk. During catalysis, ATP synthesis in the catalytic domain of F(1) is coupled via a rotary mechanism of the central stalk subunits to proton translocation. Component of the F(0) channel, it forms part of the peripheral stalk, linking F(1) to F(0). The polypeptide is ATP synthase subunit b (Citrifermentans bemidjiense (strain ATCC BAA-1014 / DSM 16622 / JCM 12645 / Bem) (Geobacter bemidjiensis)).